Consider the following 22-residue polypeptide: QGCCNGPKGCSSKWCRDHARCC.

The residue at position 1 (Q1) is a Pyrrolidone carboxylic acid; partial. Cystine bridges form between C3–C15, C4–C21, and C10–C22. The residue at position 22 (C22) is a Cysteine amide.

It belongs to the conotoxin M superfamily. In terms of tissue distribution, expressed by the venom duct.

It localises to the secreted. In terms of biological role, mu-conotoxins block voltage-gated sodium channels (Nav). This synthetic toxin blocks both voltage-gated sodium channels and nicotinic acetylcholine receptor (nAChR). Inhibits the skeletal muscle rNav1.4/SCN4A (IC(50)=1.3 nM) and the brain rNav1.2/SCN2A in a long-lasting manner. A low inhibition is also observed on neuronal mNav1.6/SCN8A and mNav1.7/SCN9A. Modestly blocks nAChR alpha-3/beta-2 subtype (IC(50)=450 nM) (partially reversible) and, to a lesser extent, alpha-7 and alpha-4/beta-2 subtypes (reversible). In vitro, decreases twitch tension in mouse hemidiaphragms (IC(50)=150 nM), and displays a high blocking effect in mouse extensor digitorum longus muscles (IC(50)=46 nM). This Conus consors (Singed cone) protein is Mu-conotoxin CnIIIC.